The sequence spans 228 residues: ATP-dependent dethiobiotin synthetase BioD (228 aa).

12–17 provides a ligand contact to ATP; it reads EIGKTT. T16 contacts Mg(2+). Residue K37 is part of the active site. S41 contributes to the substrate binding site. ATP contacts are provided by residues D54, 116–119, and 205–207; these read EGAG and PRL. Positions 54 and 116 each coordinate Mg(2+).

It belongs to the dethiobiotin synthetase family. As to quaternary structure, homodimer. The cofactor is Mg(2+).

The protein resides in the cytoplasm. It carries out the reaction (7R,8S)-7,8-diammoniononanoate + CO2 + ATP = (4R,5S)-dethiobiotin + ADP + phosphate + 3 H(+). The protein operates within cofactor biosynthesis; biotin biosynthesis; biotin from 7,8-diaminononanoate: step 1/2. Its function is as follows. Catalyzes a mechanistically unusual reaction, the ATP-dependent insertion of CO2 between the N7 and N8 nitrogen atoms of 7,8-diaminopelargonic acid (DAPA, also called 7,8-diammoniononanoate) to form a ureido ring. The sequence is that of ATP-dependent dethiobiotin synthetase BioD from Pseudomonas aeruginosa (strain LESB58).